The following is a 304-amino-acid chain: MFNKRNLKWLSVLATIIMAFVQLGGALVTKTGSEDGCGSSWPLCHGALLPQNLPIDTIIELSHRAVSGLSLIVVLWLAITAWKHIGYIREVKPLAIISIAFLLVQALIGAAAVIWQQNSYVLALHFGISLISFSSVFVLMLIIFEVDKKYEADELYIRKPLRRLTWIMTGIVYLTIYTGALVRHAKASLAYGGWPLPFHDIIPHTEQDWVQFAHRGMAFITFFWIMITFIHAVKNYSENRTIRYGYTTAFILIILQVITGALSVMTNVNLFIALLHALFITILFGMIAYFIMLMLRTIRSEKIK.

Residues 1 to 8 are Cytoplasmic-facing; sequence MFNKRNLK. The helical transmembrane segment at 9–29 threads the bilayer; that stretch reads WLSVLATIIMAFVQLGGALVT. Over 30 to 67 the chain is Extracellular; sequence KTGSEDGCGSSWPLCHGALLPQNLPIDTIIELSHRAVS. An intrachain disulfide couples Cys-37 to Cys-44. Glu-60 is a catalytic residue. His-63 lines the heme o pocket. A helical membrane pass occupies residues 68-88; that stretch reads GLSLIVVLWLAITAWKHIGYI. The Cytoplasmic segment spans residues 89–93; sequence REVKP. Residues 94-114 traverse the membrane as a helical segment; sequence LAIISIAFLLVQALIGAAAVI. Residues 115–123 are Extracellular-facing; the sequence is WQQNSYVLA. The chain crosses the membrane as a helical span at residues 124-144; that stretch reads LHFGISLISFSSVFVLMLIIF. His-125 provides a ligand contact to heme o. Residues 145–163 lie on the Cytoplasmic side of the membrane; it reads EVDKKYEADELYIRKPLRR. A helical membrane pass occupies residues 164-184; the sequence is LTWIMTGIVYLTIYTGALVRH. At 185 to 215 the chain is on the extracellular side; it reads AKASLAYGGWPLPFHDIIPHTEQDWVQFAHR. His-214 is a binding site for heme b. The helical transmembrane segment at 216 to 236 threads the bilayer; that stretch reads GMAFITFFWIMITFIHAVKNY. The Cytoplasmic portion of the chain corresponds to 237 to 244; it reads SENRTIRY. Residues 245-265 traverse the membrane as a helical segment; it reads GYTTAFILIILQVITGALSVM. Residues 266–270 are Extracellular-facing; it reads TNVNL. Residues 271–291 form a helical membrane-spanning segment; sequence FIALLHALFITILFGMIAYFI. His-276 provides a ligand contact to heme b. The Cytoplasmic portion of the chain corresponds to 292 to 304; the sequence is MLMLRTIRSEKIK.

It belongs to the COX15/CtaA family. Type 1 subfamily. In terms of assembly, interacts with CtaB. Requires heme b as cofactor.

The protein resides in the cell membrane. The enzyme catalyses Fe(II)-heme o + 2 A + H2O = Fe(II)-heme a + 2 AH2. It participates in porphyrin-containing compound metabolism; heme A biosynthesis; heme A from heme O: step 1/1. Catalyzes the conversion of heme O to heme A by two successive hydroxylations of the methyl group at C8. The first hydroxylation forms heme I, the second hydroxylation results in an unstable dihydroxymethyl group, which spontaneously dehydrates, resulting in the formyl group of heme A. In Staphylococcus haemolyticus (strain JCSC1435), this protein is Heme A synthase.